The primary structure comprises 809 residues: Ubiquitin carboxyl-terminal hydrolase 1 (809 aa).

In terms of domain architecture, USP spans alanine 101–aspartate 738. The active-site Nucleophile is the cysteine 110. The disordered stretch occupies residues asparagine 143–proline 195. A compositionally biased stretch (basic residues) spans lysine 162–serine 183. Basic and acidic residues predominate over residues serine 184–glutamate 194. A phosphoserine mark is found at serine 530, serine 531, and serine 555. The disordered stretch occupies residues alanine 569–glutamate 596. 2 positions are modified to phosphoserine: serine 618 and serine 638. Position 652 is a phosphothreonine (threonine 652). Phosphoserine occurs at positions 653, 654, and 670. The Proton acceptor role is filled by histidine 697. The interval leucine 750–asparagine 809 is disordered. Serine 755 is subject to Phosphoserine. Basic and acidic residues predominate over residues glutamine 765–glutamine 777. Over residues glutamate 778–glutamine 789 the composition is skewed to acidic residues. The segment covering glutamate 790–asparagine 809 has biased composition (basic and acidic residues).

It belongs to the peptidase C19 family.

It carries out the reaction Thiol-dependent hydrolysis of ester, thioester, amide, peptide and isopeptide bonds formed by the C-terminal Gly of ubiquitin (a 76-residue protein attached to proteins as an intracellular targeting signal).. Has an ATP-independent isopeptidase activity, cleaving at the C-terminus of the ubiquitin moiety in natural or engineered linear fusion proteins, irrespective of their size or the presence of an N-terminal extension to ubiquitin. This Saccharomyces cerevisiae (strain ATCC 204508 / S288c) (Baker's yeast) protein is Ubiquitin carboxyl-terminal hydrolase 1 (UBP1).